Consider the following 347-residue polypeptide: Probable cytosolic iron-sulfur protein assembly protein 1 (347 aa).

7 WD repeats span residues 11–48 (LHNEKIWDIDCYKGLLATASTDRRIKIVNIGDIGDGLV), 62–101 (SHKKTVRSVAWRPHSTILAAGSFDSTVSIWAKDENDGDAD), 122–161 (GHENEVKSVAWSKDGYFLATCSRDKSVWIWESDEMGEEYE), 168–207 (EHSQDVKHVVWHPFKDILASSSYDDTIRIWKEYDDDWEAA), 212–255 (GHEG…SIEE), 266–304 (VHGKPVYSVSWSEDGLIASAGSDGMLVIYKENKDNVWEV), and 311–347 (SHSIYEINVVKWIKLNNGKSYLATAGDDGYVNIWAYN).

This sequence belongs to the WD repeat CIA1 family. Interacts with NAR1.

The protein localises to the cytoplasm. Its subcellular location is the nucleus. Functionally, essential component of the cytosolic iron-sulfur (Fe/S) protein assembly machinery. Required for the maturation of extramitochondrial Fe/S proteins. In Vanderwaltozyma polyspora (strain ATCC 22028 / DSM 70294 / BCRC 21397 / CBS 2163 / NBRC 10782 / NRRL Y-8283 / UCD 57-17) (Kluyveromyces polysporus), this protein is Probable cytosolic iron-sulfur protein assembly protein 1.